The sequence spans 513 residues: MLLIDIASTSLNVGGTSSRLAKVERIAELLRAAAPDPELVAIVVAWLSGELRQRQIGVGWAALRSLPAAAGSPALTVTGTDAAFSEIGAVSGKGSAARRRELITRLFAAATETEQAFLVRLLSGELRQGALAGIMVDAVARAAEVPATAVQRAAMLGGDLPTVAAACLAAGSSGAAGALDSFTLRVGRPIGPMLAQSAGSITVALERHGGATIFEAKLDGARVQIHRTGDEVTVYTRSLDDVTARLPEVVQATLALPVSDLVADGEAIALQPDGRPHRFQVTASRFGRSVNVAAAQAKQPLSVFFFDILHRDGRDLLDAPTTDRLAALDAVVPARHRVDRLTTADAAAATDFLRATLAAGHEGVMAKSPTAPYLAGRRGAGWLKVKPVHTLDLVVLAVEWGSGRRRGKLSNIHLGARDAATGEFVMLGKTFKGMTDAMLDWQTARFTELAVGGTDGYVVALRPEQVVEVAFDGVQASSRYPGGLALRFARVVRYRDDKGPADADTIDTVRALY.

Glu215 contacts ATP. Lys217 functions as the N6-AMP-lysine intermediate in the catalytic mechanism. Arg222, Arg237, Glu266, Phe306, Arg378, and Lys384 together coordinate ATP.

This sequence belongs to the ATP-dependent DNA ligase family. Requires Mg(2+) as cofactor.

The enzyme catalyses ATP + (deoxyribonucleotide)n-3'-hydroxyl + 5'-phospho-(deoxyribonucleotide)m = (deoxyribonucleotide)n+m + AMP + diphosphate.. Functionally, DNA ligase that seals nicks in double-stranded DNA during DNA replication, DNA recombination and DNA repair. The protein is Probable DNA ligase of Mycobacterium marinum (strain ATCC BAA-535 / M).